The primary structure comprises 95 residues: Mitochondrial import inner membrane translocase subunit Tim9 (95 aa).

Positions 35 to 59 (CFTDCIRDFTTRDVKDSEEKCSLNC) match the Twin CX3C motif motif. Cystine bridges form between Cys35–Cys59 and Cys39–Cys55.

The protein belongs to the small Tim family. In terms of assembly, heterohexamer; composed of 3 copies of Tim9 and 3 copies of Tim10, named soluble 70 kDa complex. The complex associates with the Tim22 component of the TIM22 complex. Interacts with multi-pass transmembrane proteins in transit.

The protein localises to the mitochondrion inner membrane. Its function is as follows. Mitochondrial intermembrane chaperone that participates in the import and insertion of multi-pass transmembrane proteins into the mitochondrial inner membrane. May also be required for the transfer of beta-barrel precursors from the TOM complex to the sorting and assembly machinery (SAM complex) of the outer membrane. Acts as a chaperone-like protein that protects the hydrophobic precursors from aggregation and guide them through the mitochondrial intermembrane space. The chain is Mitochondrial import inner membrane translocase subunit Tim9 (Tim9a) from Drosophila melanogaster (Fruit fly).